A 435-amino-acid chain; its full sequence is ATP-dependent protease ATPase subunit HslU (435 aa).

ATP is bound by residues Ile18, 60 to 65 (GVGKTE), Asp248, Glu313, and Arg385.

This sequence belongs to the ClpX chaperone family. HslU subfamily. A double ring-shaped homohexamer of HslV is capped on each side by a ring-shaped HslU homohexamer. The assembly of the HslU/HslV complex is dependent on binding of ATP.

The protein resides in the cytoplasm. Its function is as follows. ATPase subunit of a proteasome-like degradation complex; this subunit has chaperone activity. The binding of ATP and its subsequent hydrolysis by HslU are essential for unfolding of protein substrates subsequently hydrolyzed by HslV. HslU recognizes the N-terminal part of its protein substrates and unfolds these before they are guided to HslV for hydrolysis. In Roseobacter denitrificans (strain ATCC 33942 / OCh 114) (Erythrobacter sp. (strain OCh 114)), this protein is ATP-dependent protease ATPase subunit HslU.